The sequence spans 100 residues: MELTPREKDKLLIFTAALLAERRKARGLKLNYPEAVALISAAIMEGARDGKSVAELMSDGKRVLARHEVMDGVAEMIPDIQIEATFPDGTKLVTVHQPIA.

It belongs to the urease gamma subunit family. Heterotrimer of UreA (gamma), UreB (beta) and UreC (alpha) subunits. Three heterotrimers associate to form the active enzyme.

It is found in the cytoplasm. The enzyme catalyses urea + 2 H2O + H(+) = hydrogencarbonate + 2 NH4(+). It participates in nitrogen metabolism; urea degradation; CO(2) and NH(3) from urea (urease route): step 1/1. This Leptothrix cholodnii (strain ATCC 51168 / LMG 8142 / SP-6) (Leptothrix discophora (strain SP-6)) protein is Urease subunit gamma.